The following is a 488-amino-acid chain: Probable cytochrome P450 6u1 (488 aa).

Residue Cys-430 coordinates heme.

The protein belongs to the cytochrome P450 family. The cofactor is heme.

Its subcellular location is the endoplasmic reticulum membrane. The protein localises to the microsome membrane. In terms of biological role, may be involved in the metabolism of insect hormones and in the breakdown of synthetic insecticides. This Drosophila melanogaster (Fruit fly) protein is Probable cytochrome P450 6u1 (Cyp6u1).